A 142-amino-acid chain; its full sequence is Hemoglobin subunit beta (142 aa).

Positions 3–142 (KLSEDQEHYI…VAEALSSNYH (140 aa)) constitute a Globin domain. Heme b is bound by residues His-60 and His-89.

This sequence belongs to the globin family. Heterotetramer of two alpha chains and two beta chains. In terms of tissue distribution, red blood cells.

In terms of biological role, involved in oxygen transport from gills to the various peripheral tissues. This chain is Hemoglobin subunit beta (HBB), found in Hemitrygon akajei (Red stingray).